The sequence spans 63 residues: MRCLPVFVILLLLIASTPSDTVPLKTKDDMPQASFHGNARRTLQMLSKKQCCWYFDISCCLWP.

An N-terminal signal peptide occupies residues 1 to 19 (MRCLPVFVILLLLIASTPS). A propeptide spanning residues 20–47 (DTVPLKTKDDMPQASFHGNARRTLQMLS) is cleaved from the precursor. Gln50 is subject to Pyrrolidone carboxylic acid.

It belongs to the conotoxin T superfamily. Post-translationally, contains 2 disulfide bonds that can be either 'C1-C3, C2-C4' or 'C1-C4, C2-C3', since these disulfide connectivities have been observed for conotoxins with cysteine framework V (for examples, see AC P0DQQ7 and AC P81755). As to expression, expressed by the venom duct.

It is found in the secreted. This is Conotoxin TxMRCL-D012 from Conus textile (Cloth-of-gold cone).